A 500-amino-acid polypeptide reads, in one-letter code: Probable glycine dehydrogenase (decarboxylating) subunit 2 (500 aa).

Lys-273 is subject to N6-(pyridoxal phosphate)lysine.

Belongs to the GcvP family. C-terminal subunit subfamily. The glycine cleavage system is composed of four proteins: P, T, L and H. In this organism, the P 'protein' is a heterodimer of two subunits. Pyridoxal 5'-phosphate is required as a cofactor.

The enzyme catalyses N(6)-[(R)-lipoyl]-L-lysyl-[glycine-cleavage complex H protein] + glycine + H(+) = N(6)-[(R)-S(8)-aminomethyldihydrolipoyl]-L-lysyl-[glycine-cleavage complex H protein] + CO2. Functionally, the glycine cleavage system catalyzes the degradation of glycine. The P protein binds the alpha-amino group of glycine through its pyridoxal phosphate cofactor; CO(2) is released and the remaining methylamine moiety is then transferred to the lipoamide cofactor of the H protein. The sequence is that of Probable glycine dehydrogenase (decarboxylating) subunit 2 from Rhodopirellula baltica (strain DSM 10527 / NCIMB 13988 / SH1).